A 208-amino-acid polypeptide reads, in one-letter code: Octanoyltransferase (208 aa).

The BPL/LPL catalytic domain maps to 29–208 (KTQDELVWLL…KEFNKVFCNC (180 aa)). Substrate contacts are provided by residues 68–75 (RGGKYTYH), 140–142 (AFG), and 153–155 (GVS). Catalysis depends on Cys-171, which acts as the Acyl-thioester intermediate.

The protein belongs to the LipB family.

It is found in the cytoplasm. The enzyme catalyses octanoyl-[ACP] + L-lysyl-[protein] = N(6)-octanoyl-L-lysyl-[protein] + holo-[ACP] + H(+). It participates in protein modification; protein lipoylation via endogenous pathway; protein N(6)-(lipoyl)lysine from octanoyl-[acyl-carrier-protein]: step 1/2. Its function is as follows. Catalyzes the transfer of endogenously produced octanoic acid from octanoyl-acyl-carrier-protein onto the lipoyl domains of lipoate-dependent enzymes. Lipoyl-ACP can also act as a substrate although octanoyl-ACP is likely to be the physiological substrate. This Ehrlichia ruminantium (strain Gardel) protein is Octanoyltransferase.